A 195-amino-acid chain; its full sequence is Interferon tau-8 (195 aa).

An N-terminal signal peptide occupies residues 1-23 (MAFVLSLLMALVLVSYGPGGSLG). Disulfide bonds link C24/C122 and C52/C162.

The protein belongs to the alpha/beta interferon family. IFN-alphaII subfamily. In terms of tissue distribution, constitutively and exclusively expressed in the mononuclear cells of the extraembryonic trophectoderm.

It is found in the secreted. Paracrine hormone primarily responsible for maternal recognition of pregnancy. Interacts with endometrial receptors, probably type I interferon receptors, and blocks estrogen receptor expression, preventing the estrogen-induced increase in oxytocin receptor expression in the endometrium. This results in the suppression of the pulsatile endometrial release of the luteolytic hormone prostaglandin F2-alpha, hindering the regression of the corpus luteum (luteolysis) and therefore a return to ovarian cyclicity. This, and a possible direct effect of IFN-tau on prostaglandin synthesis, leads in turn to continued ovarian progesterone secretion, which stimulates the secretion by the endometrium of the nutrients required for the growth of the conceptus. In summary, displays particularly high antiviral and antiproliferative potency concurrently with particular weak cytotoxicity, high antiluteolytic activity and immunomodulatory properties. In contrast with other IFNs, IFN-tau is not virally inducible. In Ovis aries (Sheep), this protein is Interferon tau-8 (IFNT8).